A 122-amino-acid chain; its full sequence is Large ribosomal subunit protein uL14 (122 aa).

The protein belongs to the universal ribosomal protein uL14 family. In terms of assembly, part of the 50S ribosomal subunit. Forms a cluster with proteins L3 and L19. In the 70S ribosome, L14 and L19 interact and together make contacts with the 16S rRNA in bridges B5 and B8.

Functionally, binds to 23S rRNA. Forms part of two intersubunit bridges in the 70S ribosome. The sequence is that of Large ribosomal subunit protein uL14 from Gemmatimonas aurantiaca (strain DSM 14586 / JCM 11422 / NBRC 100505 / T-27).